The primary structure comprises 309 residues: Ras-like protein 1 (309 aa).

Residues 20–25 (GVGKSA), 36–42 (VDEYDPT), 66–67 (AG), 123–126 (NKLD), and 153–155 (SAK) contribute to the GTP site. The short motif at 39 to 47 (YDPTIEDSY) is the Effector region element. The interval 177-303 (KYNSMNRQLD…SANARKESSG (127 aa)) is disordered. 2 stretches are compositionally biased toward polar residues: residues 179–188 (NSMNRQLDNT) and 209–235 (NGSY…NHNG). The segment covering 236 to 245 (ETTKRTDEKN) has biased composition (basic and acidic residues). Low complexity predominate over residues 246–256 (YVNQNNNNEGN). A compositionally biased stretch (polar residues) spans 257-296 (TKYSSNGNGNRSDISRGNQNNALNSRSKQSAEPQKNSSAN). A lipid anchor (S-palmitoyl cysteine) is attached at C305. C306 carries the cysteine methyl ester modification. C306 is lipidated: S-farnesyl cysteine. Residues 307–309 (IIC) constitute a propeptide, removed in mature form.

Belongs to the small GTPase superfamily. Ras family. Farnesylated by RAM1-RAM2, which is required for targeting RAS1 to the cytoplasmic site of the endoplasmic reticulum, where proteolytic processing of the C-terminus by RCE1 and methylation of the resulting carboxyl group by STE14 occurs. In terms of processing, palmitoylated by the ERF2-SHR5 complex, which is required for proper plasma membrane localization of RAS1.

Its subcellular location is the cell membrane. The catalysed reaction is GTP + H2O = GDP + phosphate + H(+). With respect to regulation, alternates between an inactive form bound to GDP and an active form bound to GTP. Activated by guanine nucleotide-exchange factor (GEF) CDC25 and inactivated by GTPase-activating proteins (GAPs) IRA1 and IRA2. Its function is as follows. The S.cerevisiae Ras proteins modulate the activity of the adenylate cyclase catalytic subunit and therefore affect the biosynthesis of cyclic-AMP. In Saccharomyces cerevisiae (strain ATCC 204508 / S288c) (Baker's yeast), this protein is Ras-like protein 1 (RAS1).